The sequence spans 67 residues: Conotoxin VnMMSK-03 (67 aa).

Residues 1 to 20 (MMSKLGVVLTICLLPFPLTA) form the signal peptide. A propeptide spanning residues 21–50 (LPMDGDQPADLPALRTQDFEPERSPWFDPV) is cleaved from the precursor. 3 disulfide bridges follow: Cys-53–Cys-65, Cys-54–Cys-61, and Cys-58–Cys-64. Pro-63 carries the 4-hydroxyproline modification.

It belongs to the conotoxin M superfamily. In terms of tissue distribution, expressed by the venom duct.

The protein localises to the secreted. The polypeptide is Conotoxin VnMMSK-03 (Conus ventricosus (Mediterranean cone)).